The primary structure comprises 494 residues: Glutamyl-tRNA(Gln) amidotransferase subunit A (494 aa).

Residues lysine 81 and serine 156 each act as charge relay system in the active site. Catalysis depends on serine 180, which acts as the Acyl-ester intermediate.

The protein belongs to the amidase family. GatA subfamily. Heterotrimer of A, B and C subunits.

The enzyme catalyses L-glutamyl-tRNA(Gln) + L-glutamine + ATP + H2O = L-glutaminyl-tRNA(Gln) + L-glutamate + ADP + phosphate + H(+). Its function is as follows. Allows the formation of correctly charged Gln-tRNA(Gln) through the transamidation of misacylated Glu-tRNA(Gln) in organisms which lack glutaminyl-tRNA synthetase. The reaction takes place in the presence of glutamine and ATP through an activated gamma-phospho-Glu-tRNA(Gln). This Mycobacterium tuberculosis (strain ATCC 25177 / H37Ra) protein is Glutamyl-tRNA(Gln) amidotransferase subunit A.